The chain runs to 121 residues: ATP synthase epsilon chain (121 aa).

It belongs to the ATPase epsilon chain family. In terms of assembly, F-type ATPases have 2 components, CF(1) - the catalytic core - and CF(0) - the membrane proton channel. CF(1) has five subunits: alpha(3), beta(3), gamma(1), delta(1), epsilon(1). CF(0) has three main subunits: a, b and c.

It is found in the cell membrane. Its function is as follows. Produces ATP from ADP in the presence of a proton gradient across the membrane. In Mycobacterium avium (strain 104), this protein is ATP synthase epsilon chain.